Consider the following 642-residue polypeptide: Threonine--tRNA ligase (642 aa).

The TGS domain maps to 1 to 63 (MNDITVTLPD…YNDARVVIVT (63 aa)). Residues 242–533 (DHRKIGQELD…LIEHFNGKFP (292 aa)) are catalytic. Positions 334, 385, and 510 each coordinate Zn(2+).

The protein belongs to the class-II aminoacyl-tRNA synthetase family. In terms of assembly, homodimer. Zn(2+) serves as cofactor.

It is found in the cytoplasm. It carries out the reaction tRNA(Thr) + L-threonine + ATP = L-threonyl-tRNA(Thr) + AMP + diphosphate + H(+). In terms of biological role, catalyzes the attachment of threonine to tRNA(Thr) in a two-step reaction: L-threonine is first activated by ATP to form Thr-AMP and then transferred to the acceptor end of tRNA(Thr). This is Threonine--tRNA ligase from Haloquadratum walsbyi (strain DSM 16790 / HBSQ001).